A 114-amino-acid polypeptide reads, in one-letter code: Hemerythrin (114 aa).

7 residues coordinate Fe cation: histidine 26, histidine 55, glutamate 59, histidine 74, histidine 78, histidine 102, and aspartate 107.

It belongs to the hemerythrin family. Homooctamer.

In terms of biological role, hemerythrin is a respiratory protein in blood cells of certain marine worms. The oxygen-binding site in each chain contains two iron atoms. This Phascolopsis gouldii (Peanut worm) protein is Hemerythrin.